Here is a 329-residue protein sequence, read N- to C-terminus: MIKNILLLCGGGSSEHEISLLSANFVEQQLNLIENVSVTRVEIKNEGWVTNQGELVYLDPNQKKLCSDNLSLDVDFIVPCIHGFPGETGDIQSMFEIAGIPYLGCGPEASSNSFNKITSKLWYDAIGIPNTPYLFLTRNDEQAHEQALQAFDKWGKVFVKAARQGSSVGCYSVTNKQSVSQAVNDAFGYSEQVLVEKSVKPRELEVAAYEMNGELHITKPGEVIAPDGAFYSYDEKYSTSSHSLTEVEAKNLTEEQVEAIRVASETVFKQMNLRHLSRIDFFLTEDGEIYLNEVNTFPGMTPISMFPKMLQNNGHKFHEFLADCINTAI.

The ATP-grasp domain maps to 120 to 326; that stretch reads KLWYDAIGIP…FHEFLADCIN (207 aa). Residue 150–205 coordinates ATP; it reads AFDKWGKVFVKAARQGSSVGCYSVTNKQSVSQAVNDAFGYSEQVLVEKSVKPRELE. Mg(2+)-binding residues include aspartate 280, glutamate 293, and asparagine 295.

This sequence belongs to the D-alanine--D-alanine ligase family. The cofactor is Mg(2+). It depends on Mn(2+) as a cofactor.

It is found in the cytoplasm. The catalysed reaction is 2 D-alanine + ATP = D-alanyl-D-alanine + ADP + phosphate + H(+). It participates in cell wall biogenesis; peptidoglycan biosynthesis. Functionally, cell wall formation. This is D-alanine--D-alanine ligase from Vibrio campbellii (strain ATCC BAA-1116).